We begin with the raw amino-acid sequence, 534 residues long: Calmodulin calcium-dependent NAD kinase (534 aa).

The tract at residues 167 to 196 (QKVPKLKDFVMAATRKQRFERVTKDLKVKR) is calmodulin-binding. Position 238–245 (238–245 (GGMGAGKS)) interacts with ATP.

Interacts with calmodulin (CaM) in a calcium Ca(2+)-dependent manner in vitro. Ca(2+) is required as a cofactor.

It localises to the mitochondrion outer membrane. It catalyses the reaction NAD(+) + ATP = ADP + NADP(+) + H(+). In terms of biological role, phosphorylates NAD(+) to produce NADP(+) in a calmodulin calcium-dependent manner. Does not possess activity toward NADH. Has broad specificity for the phosphoryl donor, as ATP, CTP, GTP and UTP can be used interchangeably and produce similar efficiencies. May play a role in producing NADP(H) needed to regulate the elicitor-induced reactive oxygen species (ROS) burst by sustaining the activity of NADPH oxidases. Does not seem to play a role in photosynthesis-driven growth. The polypeptide is Calmodulin calcium-dependent NAD kinase (Arabidopsis thaliana (Mouse-ear cress)).